The primary structure comprises 1054 residues: Bifunctional cytochrome P450/NADPH--P450 reductase 2 (1054 aa).

Positions 1-475 are cytochrome P450; sequence MKQASAIPQP…QADIKAETKP (475 aa). Cys-403 is a binding site for heme. A compositionally biased stretch (basic and acidic residues) spans 462–480; it reads QRKEQADIKAETKPKETKP. Residues 462 to 482 are disordered; that stretch reads QRKEQADIKAETKPKETKPKH. The tract at residues 476 to 1053 is NADPH--P450 reductase; the sequence is KETKPKHGTP…RRYVKDVWTG (578 aa). The Flavodoxin-like domain occupies 486–625; it reads LLVLFGSNLG…HRESWENRFW (140 aa). Residues 492 to 497, 539 to 542, 573 to 575, and 581 to 583 contribute to the FMN site; these read SNLGTA, SYNG, CGN, and TYQ. The FAD-binding FR-type domain maps to 663–896; that stretch reads YGAFEGIVLE…RTPQSGFQMP (234 aa).

This sequence in the N-terminal section; belongs to the cytochrome P450 family. The cofactor is FAD. Requires FMN as cofactor. It depends on heme b as a cofactor.

It localises to the cytoplasm. The catalysed reaction is an organic molecule + reduced [NADPH--hemoprotein reductase] + O2 = an alcohol + oxidized [NADPH--hemoprotein reductase] + H2O + H(+). It catalyses the reaction 2 oxidized [cytochrome P450] + NADPH = 2 reduced [cytochrome P450] + NADP(+) + H(+). In terms of biological role, functions as a fatty acid monooxygenase. Catalyzes hydroxylation of a range of medium to long-chain fatty acids, with a preference for long-chain unsaturated and branched-chain fatty acids over saturated fatty acids. Hydroxylation of myristic acid occurs mainly at the omega-2 and omega-3 positions, in approximately equal proportions. Also displays a NADPH-dependent reductase activity in the C-terminal domain, which allows electron transfer from NADPH to the heme iron of the cytochrome P450 N-terminal domain. The chain is Bifunctional cytochrome P450/NADPH--P450 reductase 2 from Bacillus subtilis (strain 168).